The chain runs to 99 residues: Integration host factor subunit alpha (99 aa).

It belongs to the bacterial histone-like protein family. As to quaternary structure, heterodimer of an alpha and a beta chain.

This protein is one of the two subunits of integration host factor, a specific DNA-binding protein that functions in genetic recombination as well as in transcriptional and translational control. The polypeptide is Integration host factor subunit alpha (Psychrobacter cryohalolentis (strain ATCC BAA-1226 / DSM 17306 / VKM B-2378 / K5)).